A 334-amino-acid polypeptide reads, in one-letter code: tRNA methyltransferase 10 homolog A (334 aa).

2 disordered regions span residues methionine 1 to arginine 101 and proline 290 to serine 334. A compositionally biased stretch (polar residues) spans histidine 26–proline 40. Positions lysine 62–isoleucine 94 form a coiled coil. Residues arginine 71–leucine 84 are compositionally biased toward basic residues. Residues glutamate 85–serine 98 show a composition bias toward basic and acidic residues. The SAM-dependent MTase TRM10-type domain occupies serine 98–isoleucine 289. The span at glutamine 305–isoleucine 317 shows a compositional bias: acidic residues.

Belongs to the class IV-like SAM-binding methyltransferase superfamily. TRM10 family.

The enzyme catalyses guanosine(9) in tRNA + S-adenosyl-L-methionine = N(1)-methylguanosine(9) in tRNA + S-adenosyl-L-homocysteine + H(+). Its function is as follows. S-adenosyl-L-methionine-dependent guanine N(1)-methyltransferase that catalyzes the formation of N(1)-methylguanine at position 9 (m1G9) in tRNAs. Probably not able to catalyze formation of N(1)-methyladenine at position 9 (m1A9) in tRNAs. In Xenopus tropicalis (Western clawed frog), this protein is tRNA methyltransferase 10 homolog A (trmt10a).